Reading from the N-terminus, the 574-residue chain is Adenine deaminase (574 aa).

This sequence belongs to the metallo-dependent hydrolases superfamily. Adenine deaminase family. The cofactor is Mn(2+).

The catalysed reaction is adenine + H2O + H(+) = hypoxanthine + NH4(+). The chain is Adenine deaminase from Thermosipho melanesiensis (strain DSM 12029 / CIP 104789 / BI429).